The primary structure comprises 242 residues: Uridylate kinase (242 aa).

15 to 18 is a binding site for ATP; the sequence is KLSG. UMP is bound at residue Gly-57. The ATP site is built by Gly-58 and Arg-62. UMP contacts are provided by residues Asp-78 and 139-146; that span reads TGNPFFTT. The ATP site is built by Thr-166, Tyr-172, and Asp-175.

This sequence belongs to the UMP kinase family. As to quaternary structure, homohexamer.

The protein resides in the cytoplasm. The enzyme catalyses UMP + ATP = UDP + ADP. It participates in pyrimidine metabolism; CTP biosynthesis via de novo pathway; UDP from UMP (UMPK route): step 1/1. With respect to regulation, inhibited by UTP. Catalyzes the reversible phosphorylation of UMP to UDP. This Acinetobacter baylyi (strain ATCC 33305 / BD413 / ADP1) protein is Uridylate kinase.